We begin with the raw amino-acid sequence, 127 residues long: Cyclin-dependent kinase 2-associated protein 2 (127 aa).

The tract at residues 1 to 47 (MSYKPIAPAPSSTPGSSTPGPGTPVPTAGSVPSPSGSVPGAAAPFRP) is disordered. The span at 9-44 (APSSTPGSSTPGPGTPVPTAGSVPSPSGSVPGAAAP) shows a compositional bias: low complexity. The interval 65–107 (PPGSQGSQSTYTDLLSVIEEMGKEIRPTYAGSKSAMERLKRGI) is interaction with CDK2.

Belongs to the CDK2AP family. In terms of assembly, component of the nucleosome remodeling and deacetylase (NuRD) repressor complex, composed of core proteins MTA1, MTA2, MTA3, RBBP4, RBBP7, HDAC1, HDAC2, MBD2, MBD3, and peripherally associated proteins CDK2AP1, CDK2AP2, GATAD2A, GATAD2B, CHD3, CHD4 and CHD5. The exact stoichiometry of the NuRD complex is unknown, and some subunits such as MBD2 and MBD3, GATAD2A and GATAD2B, and CHD3, CHD4 and CHD5 define mutually exclusive NuRD complexes. Interacts with CDK2AP1. Interacts with CDK2. Interacts with MAPK1. Phosphorylated by MAPK1 and CDK2. As to expression, oocytes (at protein level).

The protein localises to the cytoplasm. The protein resides in the nucleus. In terms of biological role, acts as a component of the histone deacetylase NuRD complex which participates in the remodeling of chromatin. Inhibits cell cycle G1/S phase transition by repressing CDK2 expression and activation; represses CDK2 activation by inhibiting its interaction with cyclin E and A. Plays a role in regulating the self-renewal of embryonic stem cells (ESCs) and in maintaining cell survival during terminal differentiation of ESCs. Regulates microtubule organization of metaphase II oocytes. The sequence is that of Cyclin-dependent kinase 2-associated protein 2 (Cdk2ap2) from Mus musculus (Mouse).